Here is a 212-residue protein sequence, read N- to C-terminus: MSDVAIIDYGMGNLRSVAKAIEHVAPGKRVAVTSDPAVVAAAARVVFPGQGAMPDCMRELDLRGLREVVKTAAASKPFLGICIGQQMLFEHSEEGNVPGLGILPGGVVRFPDAKMVAADGSRLKVPHMGWNEVCQRKPHPMWEGIPDNERFYFVHSYFVAPADAALVAAESDYGTRFTSAVARANIFAVQFHPEKSAQAGLKMLANFISWAP.

In terms of domain architecture, Glutamine amidotransferase type-1 spans 3-212 (DVAIIDYGMG…MLANFISWAP (210 aa)). Cys-82 acts as the Nucleophile in catalysis. Residues His-192 and Glu-194 contribute to the active site.

Heterodimer of HisH and HisF.

Its subcellular location is the cytoplasm. The catalysed reaction is 5-[(5-phospho-1-deoxy-D-ribulos-1-ylimino)methylamino]-1-(5-phospho-beta-D-ribosyl)imidazole-4-carboxamide + L-glutamine = D-erythro-1-(imidazol-4-yl)glycerol 3-phosphate + 5-amino-1-(5-phospho-beta-D-ribosyl)imidazole-4-carboxamide + L-glutamate + H(+). It carries out the reaction L-glutamine + H2O = L-glutamate + NH4(+). Its pathway is amino-acid biosynthesis; L-histidine biosynthesis; L-histidine from 5-phospho-alpha-D-ribose 1-diphosphate: step 5/9. IGPS catalyzes the conversion of PRFAR and glutamine to IGP, AICAR and glutamate. The HisH subunit catalyzes the hydrolysis of glutamine to glutamate and ammonia as part of the synthesis of IGP and AICAR. The resulting ammonia molecule is channeled to the active site of HisF. The chain is Imidazole glycerol phosphate synthase subunit HisH from Aromatoleum aromaticum (strain DSM 19018 / LMG 30748 / EbN1) (Azoarcus sp. (strain EbN1)).